The primary structure comprises 434 residues: Trigger factor (434 aa).

One can recognise a PPIase FKBP-type domain in the interval 160–245 (GDKAKINFVG…LNEVQAANLP (86 aa)).

The protein belongs to the FKBP-type PPIase family. Tig subfamily.

Its subcellular location is the cytoplasm. The catalysed reaction is [protein]-peptidylproline (omega=180) = [protein]-peptidylproline (omega=0). Functionally, involved in protein export. Acts as a chaperone by maintaining the newly synthesized protein in an open conformation. Functions as a peptidyl-prolyl cis-trans isomerase. This chain is Trigger factor, found in Shewanella woodyi (strain ATCC 51908 / MS32).